Consider the following 130-residue polypeptide: Small ribosomal subunit protein uS8 (130 aa).

This sequence belongs to the universal ribosomal protein uS8 family. As to quaternary structure, part of the 30S ribosomal subunit. Contacts proteins S5 and S12.

Functionally, one of the primary rRNA binding proteins, it binds directly to 16S rRNA central domain where it helps coordinate assembly of the platform of the 30S subunit. The chain is Small ribosomal subunit protein uS8 from Edwardsiella ictaluri (strain 93-146).